Reading from the N-terminus, the 236-residue chain is Small ribosomal subunit protein uS2c (236 aa).

The protein belongs to the universal ribosomal protein uS2 family.

It is found in the plastid. It localises to the chloroplast. The chain is Small ribosomal subunit protein uS2c (rps2) from Aethionema grandiflorum (Persian stone-cress).